We begin with the raw amino-acid sequence, 331 residues long: Protoheme IX farnesyltransferase (331 aa).

A run of 9 helical transmembrane segments spans residues 22-42, 50-70, 100-120, 147-167, 174-194, 220-240, 241-261, 273-293, and 307-327; these read LVKP…MWMA, FGVT…INMV, FAGI…NLLA, IVIG…AATG, WVMF…LAIL, ILLY…PLHV, LGSF…WKAV, ATSL…AMGL, and LASL…LGAM.

Belongs to the UbiA prenyltransferase family. Protoheme IX farnesyltransferase subfamily.

It is found in the cell inner membrane. It catalyses the reaction heme b + (2E,6E)-farnesyl diphosphate + H2O = Fe(II)-heme o + diphosphate. Its pathway is porphyrin-containing compound metabolism; heme O biosynthesis; heme O from protoheme: step 1/1. Converts heme B (protoheme IX) to heme O by substitution of the vinyl group on carbon 2 of heme B porphyrin ring with a hydroxyethyl farnesyl side group. The sequence is that of Protoheme IX farnesyltransferase from Synechococcus sp. (strain JA-3-3Ab) (Cyanobacteria bacterium Yellowstone A-Prime).